A 254-amino-acid polypeptide reads, in one-letter code: Alcohol dehydrogenase (254 aa).

10–33 (FVAGLGGIGLDTSKGIVKAGPKNL) lines the NAD(+) pocket. Ser138 is a binding site for substrate. The active-site Proton acceptor is Tyr151.

This sequence belongs to the short-chain dehydrogenases/reductases (SDR) family. In terms of assembly, homodimer.

The catalysed reaction is a primary alcohol + NAD(+) = an aldehyde + NADH + H(+). It carries out the reaction a secondary alcohol + NAD(+) = a ketone + NADH + H(+). This is Alcohol dehydrogenase (Adh) from Drosophila immigrans (Fruit fly).